We begin with the raw amino-acid sequence, 77 residues long: Anionic peptide 17.1 (77 aa).

A signal peptide spans 1–24; the sequence is MASKTVLVLLLVSVLVSTFCTAKA.

Belongs to the non-disulfide-bridged peptide (NDBP) superfamily. Long chain multifunctional peptide (group 2) family. As to expression, expressed by the venom gland.

The protein resides in the secreted. The chain is Anionic peptide 17.1 from Lychas mucronatus (Chinese swimming scorpion).